A 429-amino-acid chain; its full sequence is Adenylosuccinate synthetase (429 aa).

Residues Gly-12–Lys-18 and Gly-40–Thr-42 contribute to the GTP site. Asp-13 serves as the catalytic Proton acceptor. Mg(2+) contacts are provided by Asp-13 and Gly-40. IMP contacts are provided by residues Asp-13 to Lys-16, Asn-38 to His-41, Thr-129, Arg-143, Gln-224, Thr-239, and Arg-303. His-41 acts as the Proton donor in catalysis. Residue Val-299–Arg-305 participates in substrate binding. GTP-binding positions include Arg-305, Lys-331–Asp-333, and Gly-413–Gly-415.

The protein belongs to the adenylosuccinate synthetase family. In terms of assembly, homodimer. Mg(2+) serves as cofactor.

The protein resides in the cytoplasm. It carries out the reaction IMP + L-aspartate + GTP = N(6)-(1,2-dicarboxyethyl)-AMP + GDP + phosphate + 2 H(+). It participates in purine metabolism; AMP biosynthesis via de novo pathway; AMP from IMP: step 1/2. In terms of biological role, plays an important role in the de novo pathway of purine nucleotide biosynthesis. Catalyzes the first committed step in the biosynthesis of AMP from IMP. In Rhodococcus opacus (strain B4), this protein is Adenylosuccinate synthetase.